The sequence spans 340 residues: rRNA adenine N-6-methyltransferase (340 aa).

A compositionally biased stretch (low complexity) spans 1–25 (MAGPQDRPRGRGPSSGRPQRPVGGR). The segment at 1–37 (MAGPQDRPRGRGPSSGRPQRPVGGRSQRDRDRRVLGQ) is disordered. The S-adenosyl-L-methionine site is built by Asn-38, Leu-40, Gly-65, Glu-86, Asp-111, and Ala-127. Positions 284 to 340 (RGGAARGPGDQRGRRGRPGGGPRPDGRAGGGPRRDAGGRRTGDGRGGRPRPPRGGQA) are disordered. The segment covering 301–314 (PGGGPRPDGRAGGG) has biased composition (gly residues). Basic and acidic residues predominate over residues 315–329 (PRRDAGGRRTGDGRG).

The protein belongs to the class I-like SAM-binding methyltransferase superfamily. rRNA adenine N(6)-methyltransferase family.

Functionally, involved in erythromycin resistance. The protein is rRNA adenine N-6-methyltransferase (ermA) of Aeromicrobium erythreum (strain ATCC 51598 / DSM 8599 / JCM 8359 / NBRC 15406 / NRRL B-3381).